The sequence spans 372 residues: Ciliary neurotrophic factor receptor subunit alpha (372 aa).

A signal peptide spans 1–22 (MAAPVPWACCAVLAAAAAVVYA). An Ig-like C2-type domain is found at 27-104 (PQEAPHVQYE…WHLRHQVLLH (78 aa)). A disulfide bridge links C46 with C89. N-linked (GlcNAc...) asparagine glycosylation is found at N60, N70, N142, and N190. 2 consecutive Fibronectin type-III domains span residues 108 to 205 (PPRE…VKPD) and 206 to 306 (PPEN…TEEP). The short motif at 290–294 (WSDWS) is the WSXWS motif element. Residues 301 to 340 (PWTEEPRHLTTEAQAPETTTSTTSSLAPPPTTKICDPGEL) are disordered. Positions 311–326 (TEAQAPETTTSTTSSL) are enriched in low complexity. The GPI-anchor amidated serine moiety is linked to residue S342. Positions 343–372 (GGGPSAPFLIHVPVTLALAAAAATANSLLI) are cleaved as a propeptide — removed in mature form.

The protein belongs to the type I cytokine receptor family. Type 3 subfamily. As to quaternary structure, forms a heterotrimer with LIFR and IL6ST. Interacts with heterodimeric neurotropic cytokine composed of CLCF1/CLC and CRLF1/CLF-1. Either alone or in complex with the heterodimer CLCF1-CRLF1 interacts with SORL1; this interaction may promote internalization and lysosomal degradation. As to expression, expressed in retina, brain, spleen, lung, liver and kidney. In the retina it is highly expressed by photoreceptors, but also found in the RPE, inner nuclear layer and ganglion cells.

The protein localises to the cell membrane. In terms of biological role, binds to CNTF. The alpha subunit provides the receptor specificity. This chain is Ciliary neurotrophic factor receptor subunit alpha (CNTFR), found in Canis lupus familiaris (Dog).